A 39-amino-acid polypeptide reads, in one-letter code: Photosystem II reaction center protein L (39 aa).

A helical transmembrane segment spans residues 18 to 38; sequence SLYLGLLLVFVMGILFSSYFF.

This sequence belongs to the PsbL family. PSII is composed of 1 copy each of membrane proteins PsbA, PsbB, PsbC, PsbD, PsbE, PsbF, PsbH, PsbI, PsbJ, PsbK, PsbL, PsbM, PsbT, PsbX, PsbY, Psb30/Ycf12, peripheral proteins PsbO, CyanoQ (PsbQ), PsbU, PsbV and a large number of cofactors. It forms dimeric complexes.

It localises to the cellular thylakoid membrane. Functionally, one of the components of the core complex of photosystem II (PSII). PSII is a light-driven water:plastoquinone oxidoreductase that uses light energy to abstract electrons from H(2)O, generating O(2) and a proton gradient subsequently used for ATP formation. It consists of a core antenna complex that captures photons, and an electron transfer chain that converts photonic excitation into a charge separation. This subunit is found at the monomer-monomer interface and is required for correct PSII assembly and/or dimerization. This chain is Photosystem II reaction center protein L, found in Prochlorococcus marinus (strain NATL2A).